Here is a 209-residue protein sequence, read N- to C-terminus: Uracil phosphoribosyltransferase (209 aa).

Residues arginine 79, arginine 104, and 131–139 each bind 5-phospho-alpha-D-ribose 1-diphosphate; that span reads DPMLATGVS. Residues isoleucine 194 and 199–201 each bind uracil; that span reads GDA. Position 200 (aspartate 200) interacts with 5-phospho-alpha-D-ribose 1-diphosphate.

It belongs to the UPRTase family. It depends on Mg(2+) as a cofactor.

The catalysed reaction is UMP + diphosphate = 5-phospho-alpha-D-ribose 1-diphosphate + uracil. Its pathway is pyrimidine metabolism; UMP biosynthesis via salvage pathway; UMP from uracil: step 1/1. Its activity is regulated as follows. Allosterically activated by GTP. Catalyzes the conversion of uracil and 5-phospho-alpha-D-ribose 1-diphosphate (PRPP) to UMP and diphosphate. The polypeptide is Uracil phosphoribosyltransferase (Thermotoga maritima (strain ATCC 43589 / DSM 3109 / JCM 10099 / NBRC 100826 / MSB8)).